The chain runs to 135 residues: Bacilliredoxin CHU_0972 (135 aa).

Belongs to the bacilliredoxin family.

This Cytophaga hutchinsonii (strain ATCC 33406 / DSM 1761 / CIP 103989 / NBRC 15051 / NCIMB 9469 / D465) protein is Bacilliredoxin CHU_0972.